Reading from the N-terminus, the 330-residue chain is MKIKATIERVPGGMMIIPLFLGAALNTFAPGTAEFFGGFTGALITGTLPILGVFIFCVGATIDFRSSGYIARKGITLLLGKIGFAALLGVIAAQFIPDDGIQSGFFAGLSVLAIVAVMNETNGGLYLALMNHMGRKEDAGAFAFISTESGPFMTMVTFGVTGLAAFPWETLAATVIPFLLGCILGNLDHDLRDLFSKVVPAIIPFFAFSLGNTLNFGMLIQSGLLGIFIGVSVVILSGSSLFLLDRFIARGDGVAGVAASSTAGAAVAVPYALAEANASFAPVAESATAIIATSVIVTSLLTPLATVWVDKKIKQKKRRTPPPKNQMTIN.

A run of 10 helical transmembrane segments spans residues 10–30 (VPGGMMIIPLFLGAALNTFAP), 42–62 (ALITGTLPILGVFIFCVGATI), 77–97 (LLLGKIGFAALLGVIAAQFIP), 100–120 (GIQSGFFAGLSVLAIVAVMNE), 140–160 (GAFAFISTESGPFMTMVTFGV), 163–183 (LAAFPWETLAATVIPFLLGCI), 200–220 (PAIIPFFAFSLGNTLNFGMLI), 224–244 (LLGIFIGVSVVILSGSSLFLL), 254–274 (VAGVAASSTAGAAVAVPYALA), and 289–309 (AIIATSVIVTSLLTPLATVWV).

Belongs to the KdgT transporter family.

It is found in the cell membrane. The enzyme catalyses 2-dehydro-3-deoxy-D-gluconate(in) + H(+)(in) = 2-dehydro-3-deoxy-D-gluconate(out) + H(+)(out). Functionally, catalyzes the proton-dependent uptake of 2-keto-3-deoxygluconate (KDG) into the cell. The chain is 2-keto-3-deoxygluconate permease from Bacillus subtilis (strain 168).